We begin with the raw amino-acid sequence, 188 residues long: COMM domain-containing protein 1 (188 aa).

The sufficient for interaction with SLC12A2 stretch occupies residues 1 to 122 (MAGDLEGGKS…RWDNGLRGLS (122 aa)). Residues His-100, Met-109, and His-133 each coordinate Cu cation. Residues 117–185 (GLRGLSWRVD…EVEESINRLM (69 aa)) enclose the COMM domain. The tract at residues 124–188 (RVDGKSQSRH…ESINRLMQAA (65 aa)) is required for binding to PtdIns(4,5)P2.

This sequence belongs to the COMM domain-containing protein 1 family. As to quaternary structure, component of the commander complex consisting of the CCC subcomplex and the retriever subcomplex. Component of the CCC (COMMD/CCDC22/CCDC93) subcomplex consisting of COMMD1, COMMD2, COMMD3, COMMD4, COMMD5, COMMD6, COMMD7, COMMD8, COMMD9, COMMD10, CCDC22 and CCDC93; within the complex forms a heterodimer with COMMD6. Interacts with VPS35L; the interaction associates the CCC complex with the retriever complex. Identified in a complex with an E3 ubiquitin ligase complex composed of TCEB1/elongin C, CUL2, SOCS1 and RBX1; in the complex interacts directly with SOCS1 and CUL2. Identified in a complex with NF-kappa-B. Interacts directly with SLC12A2. Interacts directly with ATP7B (via the N-terminal region). Interacts with ATP7A. Interacts with FAM107A; this interaction stabilizes COMMD1 in the nucleus. Interacts with CCS, CDKN2A, RELA, REL, RELB, NFKB1/p105, NFKB2/p100, NFKBIB, SCNN1D, SCNN1B, CFTR, CLU, SGK1, AKT1, CUL1, CUL2, CUL3, CUL4A, CUL4B, CUL5, CUL7, HIF1A. In terms of processing, ubiquitinated; undergoes both 'Lys-63'- and 'Lys-48'-linked polyubiquitination. Ubiquitinated by XIAP, leading to its proteasomal degradation.

The protein localises to the nucleus. Its subcellular location is the cytoplasm. It is found in the endosome membrane. It localises to the cytoplasmic vesicle. The protein resides in the early endosome. The protein localises to the recycling endosome. Its function is as follows. Scaffold protein in the commander complex that is essential for endosomal recycling of transmembrane cargos; the commander complex is composed of the CCC subcomplex and the retriever subcomplex. Can modulate activity of cullin-RING E3 ubiquitin ligase (CRL) complexes by displacing CAND1; in vitro promotes CRL E3 activity and dissociates CAND1 from CUL1 and CUL2. Promotes ubiquitination of NF-kappa-B subunit RELA and its subsequent proteasomal degradation. Down-regulates NF-kappa-B activity. Involved in the regulation of membrane expression and ubiquitination of SLC12A2. Modulates Na(+) transport in epithelial cells by regulation of apical cell surface expression of amiloride-sensitive sodium channel (ENaC) subunits and by promoting their ubiquitination presumably involving NEDD4L. Promotes the localization of SCNN1D to recycling endosomes. Promotes CFTR cell surface expression through regulation of its ubiquitination. Down-regulates SOD1 activity by interfering with its homodimerization. Plays a role in copper ion homeostasis. Involved in copper-dependent ATP7A trafficking between the trans-Golgi network and vesicles in the cell periphery; the function is proposed to depend on its association within the CCC complex and cooperation with the WASH complex on early endosomes. Can bind one copper ion per monomer. May function to facilitate biliary copper excretion within hepatocytes. Binds to phosphatidylinositol 4,5-bisphosphate (PtdIns(4,5)P2). Involved in the regulation of HIF1A-mediated transcription; competes with ARNT/Hif-1-beta for binding to HIF1A resulting in decreased DNA binding and impaired transcriptional activation by HIF-1. Negatively regulates neuroblastoma G1/S phase cell cycle progression and cell proliferation by stimulating ubiquitination of NF-kappa-B subunit RELA and NF-kappa-B degradation in a FAM107A- and actin-dependent manner. This chain is COMM domain-containing protein 1 (Commd1), found in Mus musculus (Mouse).